The chain runs to 144 residues: Deoxyuridine 5'-triphosphate nucleotidohydrolase (144 aa).

Substrate is bound by residues 63 to 65 (RSG), Asn-76, and 80 to 82 (TVD).

It belongs to the dUTPase family. It depends on Mg(2+) as a cofactor.

It catalyses the reaction dUTP + H2O = dUMP + diphosphate + H(+). Its pathway is pyrimidine metabolism; dUMP biosynthesis; dUMP from dCTP (dUTP route): step 2/2. Its function is as follows. This enzyme is involved in nucleotide metabolism: it produces dUMP, the immediate precursor of thymidine nucleotides and it decreases the intracellular concentration of dUTP so that uracil cannot be incorporated into DNA. This Flavobacterium johnsoniae (strain ATCC 17061 / DSM 2064 / JCM 8514 / BCRC 14874 / CCUG 350202 / NBRC 14942 / NCIMB 11054 / UW101) (Cytophaga johnsonae) protein is Deoxyuridine 5'-triphosphate nucleotidohydrolase.